The sequence spans 526 residues: Cytochrome P450 monooxygenase COX2 (526 aa).

N11 carries N-linked (GlcNAc...) asparagine glycosylation. Residues 12-31 form a helical membrane-spanning segment; the sequence is ITTNHVAAAVCAGIAVYAIV. A glycan (N-linked (GlcNAc...) asparagine) is linked at N302. C450 lines the heme pocket.

This sequence belongs to the cytochrome P450 family. Heme is required as a cofactor.

Its subcellular location is the membrane. It participates in secondary metabolite biosynthesis. Functionally, cytochrome P450 monooxygenase; part of the gene cluster that mediates the biosynthesis of alpha-cuprenene and oxidized derivatives. The alpha-cuprenene synthase COP6 is the only sesquiterpene synthase identified in C.cinereus that appears to be part of a biosynthetic gene cluster and is highly specific since it catalyzes the cyclization of (2E,6E)-farnesyl diphosphate into only one product, alpha-cuprenene. The cytochrome P450 monooxygenase COX2 then oxidizes the cyclohexadiene ring of alpha-cuprenene at positions 1 and 4, yielding first alpha-cuparene, followed by alpha-cuparophenol and a further yet unidentified compound resulting from one additional oxidation step. The cytochrome P450 monooxygenase COX1 then likely catalyzes the oxidation at position 9 of the pentane ring of alpha-cuprenene to give the corresponding hydroxy or ketone derivatives. This is Cytochrome P450 monooxygenase COX2 from Coprinopsis cinerea (strain Okayama-7 / 130 / ATCC MYA-4618 / FGSC 9003) (Inky cap fungus).